The primary structure comprises 762 residues: uncharacterized protein (762 aa).

In terms of domain architecture, MCM spans 334-542; that stretch reads IIDILSNYLI…SDEEIAEHIL (209 aa). 384–391 serves as a coordination point for ATP; the sequence is TDPGIGKS.

The protein belongs to the MCM family.

This is an uncharacterized protein from Methanocaldococcus jannaschii (strain ATCC 43067 / DSM 2661 / JAL-1 / JCM 10045 / NBRC 100440) (Methanococcus jannaschii).